A 339-amino-acid chain; its full sequence is Riboflavin biosynthesis protein RibD (339 aa).

A deaminase region spans residues 1–152 (MNVEQVKSID…REWLHKQRTG (152 aa)). Residues 7–129 (KSIDEAMGLA…RLSAAGLQVR (123 aa)) enclose the CMP/dCMP-type deaminase domain. Histidine 57 serves as a coordination point for Zn(2+). Glutamate 59 functions as the Proton donor in the catalytic mechanism. Positions 82 and 91 each coordinate Zn(2+). The interval 153-339 (LPHVTWKYAT…PDLLLSLVAR (187 aa)) is reductase. NADP(+) is bound by residues alanine 161 and 168–171 (SAAA). Residue serine 175 participates in substrate binding. Tryptophan 177 serves as a coordination point for NADP(+). Arginine 191 provides a ligand contact to substrate. Positions 203 and 207 each coordinate NADP(+). 3 residues coordinate substrate: leucine 211, arginine 214, and glutamate 272. Residue 274 to 280 (GPTLAGA) participates in NADP(+) binding.

The protein in the N-terminal section; belongs to the cytidine and deoxycytidylate deaminase family. In the C-terminal section; belongs to the HTP reductase family. Zn(2+) serves as cofactor.

It catalyses the reaction 2,5-diamino-6-hydroxy-4-(5-phosphoribosylamino)-pyrimidine + H2O + H(+) = 5-amino-6-(5-phospho-D-ribosylamino)uracil + NH4(+). It carries out the reaction 5-amino-6-(5-phospho-D-ribitylamino)uracil + NADP(+) = 5-amino-6-(5-phospho-D-ribosylamino)uracil + NADPH + H(+). It functions in the pathway cofactor biosynthesis; riboflavin biosynthesis; 5-amino-6-(D-ribitylamino)uracil from GTP: step 2/4. Its pathway is cofactor biosynthesis; riboflavin biosynthesis; 5-amino-6-(D-ribitylamino)uracil from GTP: step 3/4. Its function is as follows. Converts 2,5-diamino-6-(ribosylamino)-4(3h)-pyrimidinone 5'-phosphate into 5-amino-6-(ribosylamino)-2,4(1h,3h)-pyrimidinedione 5'-phosphate. The protein is Riboflavin biosynthesis protein RibD (ribD) of Mycobacterium tuberculosis (strain CDC 1551 / Oshkosh).